The primary structure comprises 388 residues: Chorismate synthase (388 aa).

2 residues coordinate NADP(+): R39 and R45. Residues 130–132 (RSS), 251–252 (NA), G296, 311–315 (KPIPT), and R337 each bind FMN.

It belongs to the chorismate synthase family. Homotetramer. The cofactor is FMNH2.

It catalyses the reaction 5-O-(1-carboxyvinyl)-3-phosphoshikimate = chorismate + phosphate. Its pathway is metabolic intermediate biosynthesis; chorismate biosynthesis; chorismate from D-erythrose 4-phosphate and phosphoenolpyruvate: step 7/7. Its function is as follows. Catalyzes the anti-1,4-elimination of the C-3 phosphate and the C-6 proR hydrogen from 5-enolpyruvylshikimate-3-phosphate (EPSP) to yield chorismate, which is the branch point compound that serves as the starting substrate for the three terminal pathways of aromatic amino acid biosynthesis. This reaction introduces a second double bond into the aromatic ring system. In Lactococcus lactis subsp. cremoris (strain MG1363), this protein is Chorismate synthase.